Consider the following 323-residue polypeptide: Aldo-keto reductase family 1 member C3 (323 aa).

NADP(+) is bound by residues 23–24 and Asp-50; that span reads TY. Tyr-55 functions as the Proton donor in the catalytic mechanism. His-117 contacts substrate. NADP(+) is bound by residues 166 to 167, Gln-190, 216 to 222, 270 to 272, and 276 to 280; these read SN, YSALGSQ, KSY, and RIRQN.

Belongs to the aldo/keto reductase family. As to expression, expressed in many tissues including adrenal gland, brain, kidney, liver, lung, mammary gland, placenta, small intestine, colon, spleen, prostate and testis. High expression in prostate and mammary gland. In the prostate, higher levels in epithelial cells than in stromal cells. In the brain, expressed in medulla, spinal cord, frontotemporal lobes, thalamus, subthalamic nuclei and amygdala. Weaker expression in the hippocampus, substantia nigra and caudate.

It is found in the cytoplasm. It carries out the reaction a 3alpha-hydroxysteroid + NADP(+) = a 3-oxosteroid + NADPH + H(+). It catalyses the reaction a 3alpha-hydroxysteroid + NAD(+) = a 3-oxosteroid + NADH + H(+). The enzyme catalyses prostaglandin F2alpha + NADP(+) = prostaglandin D2 + NADPH + H(+). The catalysed reaction is prostaglandin F2alpha + NADP(+) = prostaglandin H2 + NADPH + H(+). It carries out the reaction prostaglandin D2 + NADPH + H(+) = 11beta-prostaglandin F2 + NADP(+). It catalyses the reaction prostaglandin D2-ethanolamide + NADPH + H(+) = 11beta-prostaglandin F2-ethanolamide + NADP(+). The enzyme catalyses testosterone + NAD(+) = androst-4-ene-3,17-dione + NADH + H(+). The catalysed reaction is testosterone + NADP(+) = androst-4-ene-3,17-dione + NADPH + H(+). It carries out the reaction 17beta-estradiol + NADP(+) = estrone + NADPH + H(+). It catalyses the reaction 17beta-estradiol + NAD(+) = estrone + NADH + H(+). The enzyme catalyses (20S)-hydroxypregn-4-en-3-one + NADP(+) = progesterone + NADPH + H(+). The catalysed reaction is (20S)-hydroxypregn-4-en-3-one + NAD(+) = progesterone + NADH + H(+). It carries out the reaction 5alpha-androstane-3alpha,17beta-diol + NADP(+) = 17beta-hydroxy-5alpha-androstan-3-one + NADPH + H(+). It catalyses the reaction 5alpha-androstane-3alpha,17beta-diol + NAD(+) = 17beta-hydroxy-5alpha-androstan-3-one + NADH + H(+). The enzyme catalyses androsterone + NADPH + H(+) = 5alpha-androstane-3alpha,17beta-diol + NADP(+). The catalysed reaction is 5alpha-androstane-3alpha,17beta-diol + NAD(+) = androsterone + NADH + H(+). It carries out the reaction 5alpha-androstane-3beta,17beta-diol + NADP(+) = 17beta-hydroxy-5alpha-androstan-3-one + NADPH + H(+). It catalyses the reaction 9-cis-retinol + NADP(+) = 9-cis-retinal + NADPH + H(+). Its pathway is steroid metabolism. Its activity is regulated as follows. Strongly inhibited by nonsteroidal anti-inflammatory drugs (NSAID) including flufenamic acid and indomethacin. Also inhibited by the flavinoid, rutin, and by selective serotonin inhibitors (SSRIs). The oxidation reaction is inhibited by low micromolar concentrations of NADPH. In terms of biological role, cytosolic aldo-keto reductase that catalyzes the NADH and NADPH-dependent reduction of ketosteroids to hydroxysteroids. Acts as a NAD(P)(H)-dependent 3-, 17- and 20-ketosteroid reductase on the steroid nucleus and side chain and regulates the metabolism of androgens, estrogens and progesterone. Displays the ability to catalyze both oxidation and reduction in vitro, but most probably acts as a reductase in vivo since the oxidase activity measured in vitro is inhibited by physiological concentration of NADPH. Acts preferentially as a 17-ketosteroid reductase and has the highest catalytic efficiency of the AKR1C enzyme for the reduction of delta4-androstenedione to form testosterone. Reduces prostaglandin (PG) D2 to 11beta-prostaglandin F2, progesterone to 20alpha-hydroxyprogesterone and estrone to 17beta-estradiol. Catalyzes the transformation of the potent androgen dihydrotestosterone (DHT) into the less active form, 5-alpha-androstan-3-alpha,17-beta-diol (3-alpha-diol). Also displays retinaldehyde reductase activity toward 9-cis-retinal. This Homo sapiens (Human) protein is Aldo-keto reductase family 1 member C3 (AKR1C3).